We begin with the raw amino-acid sequence, 315 residues long: Replication factor C small subunit (315 aa).

43–50 provides a ligand contact to ATP; it reads GSPGVGKT.

It belongs to the activator 1 small subunits family. RfcS subfamily. In terms of assembly, heteromultimer composed of small subunits (RfcS) and large subunits (RfcL).

In terms of biological role, part of the RFC clamp loader complex which loads the PCNA sliding clamp onto DNA. This is Replication factor C small subunit from Methanococcus maripaludis (strain DSM 14266 / JCM 13030 / NBRC 101832 / S2 / LL).